The primary structure comprises 180 residues: Crossover junction endodeoxyribonuclease RuvC (180 aa).

Active-site residues include Asp-7, Glu-66, and Asp-138. Mg(2+) is bound by residues Asp-7, Glu-66, and Asp-138.

This sequence belongs to the RuvC family. In terms of assembly, homodimer which binds Holliday junction (HJ) DNA. The HJ becomes 2-fold symmetrical on binding to RuvC with unstacked arms; it has a different conformation from HJ DNA in complex with RuvA. In the full resolvosome a probable DNA-RuvA(4)-RuvB(12)-RuvC(2) complex forms which resolves the HJ. Requires Mg(2+) as cofactor.

It localises to the cytoplasm. The enzyme catalyses Endonucleolytic cleavage at a junction such as a reciprocal single-stranded crossover between two homologous DNA duplexes (Holliday junction).. Functionally, the RuvA-RuvB-RuvC complex processes Holliday junction (HJ) DNA during genetic recombination and DNA repair. Endonuclease that resolves HJ intermediates. Cleaves cruciform DNA by making single-stranded nicks across the HJ at symmetrical positions within the homologous arms, yielding a 5'-phosphate and a 3'-hydroxyl group; requires a central core of homology in the junction. The consensus cleavage sequence is 5'-(A/T)TT(C/G)-3'. Cleavage occurs on the 3'-side of the TT dinucleotide at the point of strand exchange. HJ branch migration catalyzed by RuvA-RuvB allows RuvC to scan DNA until it finds its consensus sequence, where it cleaves and resolves the cruciform DNA. The polypeptide is Crossover junction endodeoxyribonuclease RuvC (Burkholderia thailandensis (strain ATCC 700388 / DSM 13276 / CCUG 48851 / CIP 106301 / E264)).